The sequence spans 80 residues: Small ribosomal subunit protein bS18 (80 aa).

This sequence belongs to the bacterial ribosomal protein bS18 family. As to quaternary structure, part of the 30S ribosomal subunit. Forms a tight heterodimer with protein bS6.

Functionally, binds as a heterodimer with protein bS6 to the central domain of the 16S rRNA, where it helps stabilize the platform of the 30S subunit. The chain is Small ribosomal subunit protein bS18 from Staphylococcus haemolyticus (strain JCSC1435).